A 259-amino-acid chain; its full sequence is Phosphatidylglycerol--prolipoprotein diacylglyceryl transferase (259 aa).

Helical transmembrane passes span 12–32, 46–66, 83–103, and 109–129; these read LSLH…VYLA, IIDF…IYYV, IWNG…VLFV, and VLNP…AQAI. R131 is an a 1,2-diacyl-sn-glycero-3-phospho-(1'-sn-glycerol) binding site. Transmembrane regions (helical) follow at residues 167 to 187, 194 to 214, and 226 to 246; these read VPTF…IMVW, LVDG…RLVI, and GIRV…VFIF.

It belongs to the Lgt family.

It localises to the cell membrane. It catalyses the reaction L-cysteinyl-[prolipoprotein] + a 1,2-diacyl-sn-glycero-3-phospho-(1'-sn-glycerol) = an S-1,2-diacyl-sn-glyceryl-L-cysteinyl-[prolipoprotein] + sn-glycerol 1-phosphate + H(+). The protein operates within protein modification; lipoprotein biosynthesis (diacylglyceryl transfer). Its function is as follows. Catalyzes the transfer of the diacylglyceryl group from phosphatidylglycerol to the sulfhydryl group of the N-terminal cysteine of a prolipoprotein, the first step in the formation of mature lipoproteins. The polypeptide is Phosphatidylglycerol--prolipoprotein diacylglyceryl transferase (Streptococcus equi subsp. equi (strain 4047)).